The primary structure comprises 478 residues: RNA pseudouridine synthase 3, mitochondrial (478 aa).

The N-terminal 20 residues, 1-20 (MWKAKTCFRQIYLTVLIRRY), are a transit peptide targeting the mitochondrion. The 71-residue stretch at 92–162 (EEIYDKAIQT…MRISKRYDTI (71 aa)) folds into the S4 RNA-binding domain. D232 is an active-site residue.

The protein belongs to the pseudouridine synthase RluA family.

The protein resides in the mitochondrion. The enzyme catalyses a uridine in RNA = a pseudouridine in RNA. This Arabidopsis thaliana (Mouse-ear cress) protein is RNA pseudouridine synthase 3, mitochondrial.